We begin with the raw amino-acid sequence, 432 residues long: Alpha-galactosidase (432 aa).

2-68 provides a ligand contact to NAD(+); it reads KKITFIGAGS…PSVAINSYDD (67 aa). Asn148 is a binding site for substrate. Residue Cys169 coordinates Mn(2+). The active-site Proton donor is His170. A Mn(2+)-binding site is contributed by His199.

The protein belongs to the glycosyl hydrolase 4 family. In terms of assembly, homodimer. Requires Mn(2+) as cofactor. It depends on NAD(+) as a cofactor.

The protein resides in the cytoplasm. It carries out the reaction Hydrolysis of terminal, non-reducing alpha-D-galactose residues in alpha-D-galactosides, including galactose oligosaccharides, galactomannans and galactolipids.. In terms of biological role, catalyzes the hydrolysis of melibiose and alpha-galactosides of the raffinose family of oligosaccharides (RFOs) such as raffinose and stachyose. Cannot act on polymeric substrates such as locust bean gum. In Bacillus subtilis (strain 168), this protein is Alpha-galactosidase.